The following is a 398-amino-acid chain: Ubiquitin-like modifier-activating enzyme 5 (398 aa).

The ATP site is built by Gly79, Asp100, Lys123, Asn146, and Asn180. 2 residues coordinate Zn(2+): Cys222 and Cys225. The Glycyl thioester intermediate role is filled by Cys246. Residues Cys299 and Cys304 each contribute to the Zn(2+) site. The UFM1-interacting sequence (UIS) motif lies at 330 to 342 (VVHEDNEWGIELV). Residues 343 to 373 (SEVTEAELQDASGPIPDLPEGITVAYTIPEK) form a linker region. Residues 383–398 (ETEQSLEELMAQMKKI) carry the UFC1-binding sequence (UFC) motif.

It belongs to the ubiquitin-activating E1 family. UBA5 subfamily. Homodimer; homodimerization is required for ufm1 activation. Interacts (via UIS motif) with ufm1; binds ufm1 via a trans-binding mechanism in which ufm1 interacts with distinct sites in both subunits of the uba5 homodimer. Interacts (via C-terminus) with ufc1.

The protein resides in the cytoplasm. The protein localises to the nucleus. Its subcellular location is the endoplasmic reticulum membrane. It localises to the golgi apparatus. Its function is as follows. E1-like enzyme which specifically catalyzes the first step in ufmylation. Activates ufm1 by first adenylating its C-terminal glycine residue with ATP, and thereafter linking this residue to the side chain of a cysteine residue in E1, yielding a ufm1-E1 thioester and free AMP. Activates ufm1 via a trans-binding mechanism, in which ufm1 interacts with distinct sites in both subunits of the uba5 homodimer. Trans-binding also promotes stabilization of the uba5 homodimer, and enhances ATP-binding. Transfer of ufm1 from uba5 to the E2-like enzyme UFC1 also takes place using a trans mechanism. Ufmylation plays a key role in various processes, such as ribosome recycling, response to DNA damage, interferon response or reticulophagy (also called ER-phagy). The polypeptide is Ubiquitin-like modifier-activating enzyme 5 (Danio rerio (Zebrafish)).